We begin with the raw amino-acid sequence, 456 residues long: RUN domain-containing protein 3B (456 aa).

The disordered stretch occupies residues 1–24 (MASRSLGGLSGIRGGGGGGGKKSL). Residues 8-21 (GLSGIRGGGGGGGK) show a composition bias toward gly residues. Arginine 13 carries the post-translational modification Omega-N-methylarginine. An RUN domain is found at 57–189 (DDSSPEFNNF…IDFSFCLKGE (133 aa)). Residues serine 215 and serine 216 each carry the phosphoserine modification. The tract at residues 216–237 (SDEEELRTLGSSGSESSTPENV) is disordered. Polar residues predominate over residues 224-235 (LGSSGSESSTPE). A coiled-coil region spans residues 300–325 (AHKLEKEQLEYIIVELQDQLTVLKNN). The segment covering 382-405 (SLSQTSLDPGQSQEGDGKQDTLNV) has biased composition (polar residues). The disordered stretch occupies residues 382–411 (SLSQTSLDPGQSQEGDGKQDTLNVMSEGKE).

The protein belongs to the RUNDC3 family. In terms of assembly, interacts with RAP2A.

The chain is RUN domain-containing protein 3B (RUNDC3B) from Pongo abelii (Sumatran orangutan).